The following is a 288-amino-acid chain: 4-hydroxy-3-methylbut-2-enyl diphosphate reductase (288 aa).

Residue cysteine 13 coordinates [4Fe-4S] cluster. (2E)-4-hydroxy-3-methylbut-2-enyl diphosphate-binding residues include histidine 41 and histidine 75. Dimethylallyl diphosphate contacts are provided by histidine 41 and histidine 75. 2 residues coordinate isopentenyl diphosphate: histidine 41 and histidine 75. Residue cysteine 97 coordinates [4Fe-4S] cluster. Histidine 130 serves as a coordination point for (2E)-4-hydroxy-3-methylbut-2-enyl diphosphate. Histidine 130 contributes to the dimethylallyl diphosphate binding site. Histidine 130 is an isopentenyl diphosphate binding site. Glutamate 132 (proton donor) is an active-site residue. Threonine 168 contributes to the (2E)-4-hydroxy-3-methylbut-2-enyl diphosphate binding site. Cysteine 199 is a [4Fe-4S] cluster binding site. Positions 227, 228, 229, and 271 each coordinate (2E)-4-hydroxy-3-methylbut-2-enyl diphosphate. 4 residues coordinate dimethylallyl diphosphate: serine 227, serine 228, asparagine 229, and serine 271. Serine 227, serine 228, asparagine 229, and serine 271 together coordinate isopentenyl diphosphate.

The protein belongs to the IspH family. It depends on [4Fe-4S] cluster as a cofactor.

It carries out the reaction isopentenyl diphosphate + 2 oxidized [2Fe-2S]-[ferredoxin] + H2O = (2E)-4-hydroxy-3-methylbut-2-enyl diphosphate + 2 reduced [2Fe-2S]-[ferredoxin] + 2 H(+). The catalysed reaction is dimethylallyl diphosphate + 2 oxidized [2Fe-2S]-[ferredoxin] + H2O = (2E)-4-hydroxy-3-methylbut-2-enyl diphosphate + 2 reduced [2Fe-2S]-[ferredoxin] + 2 H(+). The protein operates within isoprenoid biosynthesis; dimethylallyl diphosphate biosynthesis; dimethylallyl diphosphate from (2E)-4-hydroxy-3-methylbutenyl diphosphate: step 1/1. It functions in the pathway isoprenoid biosynthesis; isopentenyl diphosphate biosynthesis via DXP pathway; isopentenyl diphosphate from 1-deoxy-D-xylulose 5-phosphate: step 6/6. Functionally, catalyzes the conversion of 1-hydroxy-2-methyl-2-(E)-butenyl 4-diphosphate (HMBPP) into a mixture of isopentenyl diphosphate (IPP) and dimethylallyl diphosphate (DMAPP). Acts in the terminal step of the DOXP/MEP pathway for isoprenoid precursor biosynthesis. In Phocaeicola vulgatus (strain ATCC 8482 / DSM 1447 / JCM 5826 / CCUG 4940 / NBRC 14291 / NCTC 11154) (Bacteroides vulgatus), this protein is 4-hydroxy-3-methylbut-2-enyl diphosphate reductase.